A 294-amino-acid polypeptide reads, in one-letter code: Retinoic acid receptor responder protein 1 (294 aa).

Residues 1–20 are Lumenal-facing; it reads MQPRRQRLPAPWSGPRGPRP. Residues 21 to 42 form a helical; Signal-anchor for type III membrane protein membrane-spanning segment; it reads TAPLLALLLLLAPVAAPAGSGD. Cystatin LXN-type domains lie at 38–153 and 173–276; these read AGSG…EKKK and EIVS…TPEE. Residue Ser40 is glycosylated (O-linked (Xyl...) (chondroitin sulfate) serine). Over 43–294 the chain is Cytoplasmic; sequence PDDPGQPQDA…AVVPTELSNF (252 aa). The disordered stretch occupies residues 273–294; sequence TPEEASGTEEGSAVVPTELSNF.

Belongs to the protease inhibitor I47 (latexin) family. Interacts with AGBL2, KIF11 and MAPRE1. In terms of processing, not N-glycosylated. O-glycosylated; contains chondroitin sulfate. As to expression, detected in urine (at protein level).

It localises to the membrane. It is found in the secreted. Inhibitor of the cytoplasmic carboxypeptidase AGBL2, may regulate the alpha-tubulin tyrosination cycle. The protein is Retinoic acid receptor responder protein 1 (RARRES1) of Homo sapiens (Human).